The sequence spans 242 residues: Pyridoxine 5'-phosphate synthase (242 aa).

Asn-7 lines the 3-amino-2-oxopropyl phosphate pocket. Residue 9-10 (DH) participates in 1-deoxy-D-xylulose 5-phosphate binding. Arg-18 provides a ligand contact to 3-amino-2-oxopropyl phosphate. Residue His-43 is the Proton acceptor of the active site. Residues Arg-45 and His-50 each coordinate 1-deoxy-D-xylulose 5-phosphate. The active-site Proton acceptor is the Glu-70. Thr-100 contributes to the 1-deoxy-D-xylulose 5-phosphate binding site. Catalysis depends on His-190, which acts as the Proton donor. 3-amino-2-oxopropyl phosphate-binding positions include Gly-191 and 212 to 213 (GH).

This sequence belongs to the PNP synthase family. In terms of assembly, homooctamer; tetramer of dimers.

The protein localises to the cytoplasm. It catalyses the reaction 3-amino-2-oxopropyl phosphate + 1-deoxy-D-xylulose 5-phosphate = pyridoxine 5'-phosphate + phosphate + 2 H2O + H(+). The protein operates within cofactor biosynthesis; pyridoxine 5'-phosphate biosynthesis; pyridoxine 5'-phosphate from D-erythrose 4-phosphate: step 5/5. In terms of biological role, catalyzes the complicated ring closure reaction between the two acyclic compounds 1-deoxy-D-xylulose-5-phosphate (DXP) and 3-amino-2-oxopropyl phosphate (1-amino-acetone-3-phosphate or AAP) to form pyridoxine 5'-phosphate (PNP) and inorganic phosphate. This is Pyridoxine 5'-phosphate synthase from Thermodesulfovibrio yellowstonii (strain ATCC 51303 / DSM 11347 / YP87).